Consider the following 1305-residue polypeptide: Nonribosomal peptide synthetase hkm11 (1305 aa).

The tract at residues 278–672 (TYGELDRWAK…GEIEHHLRPK (395 aa)) is adenylation. In terms of domain architecture, Carrier spans 788 to 864 (APTTEQEALL…SLASRMRQYN (77 aa)). S825 carries the O-(pantetheine 4'-phosphoryl)serine modification. Residues 926–1166 (KGQLDRHQLQ…LCLNITAVRV (241 aa)) are condensation.

The protein belongs to the NRP synthetase family.

It catalyses the reaction hancockiamide D + (E)-cinnamate + ATP = hancockiamide A + AMP + diphosphate. It carries out the reaction hancockiamide H + (E)-cinnamate + ATP = hancockiamide G + AMP + diphosphate. Its pathway is secondary metabolite biosynthesis. Functionally, nonribosomal peptide synthetase; part of the gene cluster that mediates the biosynthesis of hancockiamides, an unusual new family of N-cinnamoylated piperazines. The NRPS hkm10 and the NmrA-like reductase hkm9 are proposed to convert two molecules of L-Phe to the intermediary piperazine called xenocockiamide A. Xenocockiamide A is then converted to hancockiamide D via a series of hydroxylations and O-methylations. The tyrosinase hkm6 may catalyze an aromatic hydroxylation, then the 2-oxoglutarate-dependent Fe(II) dioxygenase hkm4 and the FAD-dependent phenol hydroxylase hkm7 may catalyze consecutive hydroxylations to install 2 more hydroxy groups, and the methyltransferase hkm8 probably catalyzes two methylations using 2 molecules of S-adenosyl-L-methionine (SAM). The NRPS hkm11 activates and transfers trans-cinnamate supplied by the PAL hkm12 to hancockiamide D and produces hancockiamide A. NRPS Hkm11 has the flexibility to tolerate the bulky hancockiamide G as a substrate and the absence of the acetyl-transferase hkm3 opens up the opportunity for hkm11 to introduce a second N-cinnamoyl moiety. The cytochrome P450 monooxygenase hkm5 catalyzes the methylenedioxy bridge formation, converting hancockiamide A into hancockiamide G. Hkm5 can also convert hancockiamide B into hancockiamide C, and hancockiamide D into hancockiamide H. The N-acetyltransferase hkm3 finally transfers an acetyl group to 1-N of piperazine, converting hancockiamide A into hancockiamide B and hancockiamide G into hancockiamide C. This is Nonribosomal peptide synthetase hkm11 from Aspergillus hancockii.